We begin with the raw amino-acid sequence, 191 residues long: Protein YceI (191 aa).

Residues 1-22 (MKKSLLGLTFASLMFSAGSAVA) form the signal peptide.

This sequence belongs to the UPF0312 family. Type 1 subfamily.

It localises to the periplasm. The polypeptide is Protein YceI (Escherichia coli O6:H1 (strain CFT073 / ATCC 700928 / UPEC)).